The following is a 380-amino-acid chain: Ribosomal RNA large subunit methyltransferase G (380 aa).

Belongs to the methyltransferase superfamily. RlmG family.

It is found in the cytoplasm. It catalyses the reaction guanosine(1835) in 23S rRNA + S-adenosyl-L-methionine = N(2)-methylguanosine(1835) in 23S rRNA + S-adenosyl-L-homocysteine + H(+). Specifically methylates the guanine in position 1835 (m2G1835) of 23S rRNA. The chain is Ribosomal RNA large subunit methyltransferase G from Aeromonas hydrophila subsp. hydrophila (strain ATCC 7966 / DSM 30187 / BCRC 13018 / CCUG 14551 / JCM 1027 / KCTC 2358 / NCIMB 9240 / NCTC 8049).